Reading from the N-terminus, the 514-residue chain is Ribonuclease Y (514 aa).

Residues 3–23 form a helical membrane-spanning segment; that stretch reads YMIIYEIIAGILIVVAILIHF. One can recognise a KH domain in the interval 204-289; the sequence is TVHVVTLPND…EMVEKAEKEL (86 aa). One can recognise an HD domain in the interval 330 to 423; the sequence is VLKHSVEVAY…VQAADAISAA (94 aa).

The protein belongs to the RNase Y family.

The protein localises to the cell membrane. In terms of biological role, endoribonuclease that initiates mRNA decay. This chain is Ribonuclease Y, found in Clostridium kluyveri (strain ATCC 8527 / DSM 555 / NBRC 12016 / NCIMB 10680 / K1).